Consider the following 310-residue polypeptide: UDP-N-acetylenolpyruvoylglucosamine reductase (310 aa).

The region spanning 34-211 (TGGPAQCVYV…REDMGKIAQE (178 aa)) is the FAD-binding PCMH-type domain. The active site involves Arg177. Catalysis depends on Ser225, which acts as the Proton donor. The active site involves Glu295.

The protein belongs to the MurB family. The cofactor is FAD.

It localises to the cytoplasm. It catalyses the reaction UDP-N-acetyl-alpha-D-muramate + NADP(+) = UDP-N-acetyl-3-O-(1-carboxyvinyl)-alpha-D-glucosamine + NADPH + H(+). It participates in cell wall biogenesis; peptidoglycan biosynthesis. Cell wall formation. The protein is UDP-N-acetylenolpyruvoylglucosamine reductase of Beijerinckia indica subsp. indica (strain ATCC 9039 / DSM 1715 / NCIMB 8712).